The chain runs to 689 residues: Solute carrier family 22 member 23 (689 aa).

Disordered stretches follow at residues 1-55 (MAID…PLPA) and 162-188 (TASWGTTSNRSNSSDTPPLPSPPGKGN). The N-linked (GlcNAc...) asparagine glycan is linked to N24. A compositionally biased stretch (polar residues) spans 165-177 (WGTTSNRSNSSDT). The next 2 membrane-spanning stretches (helical) occupy residues 229–249 (FSLLVGLIFGYLITGCIADWV) and 253–273 (PVLLFSVIFILIFGLTVALSV). N274 carries N-linked (GlcNAc...) asparagine glycosylation. Helical transmembrane passes span 283-303 (FFEGFCLAGIILTLYALRIEL), 310-330 (FIITMVASFVAMAGQFLMPGL), 339-359 (VLQALIICPFLLMLLYWSIFP), 462-482 (ADYYTMASIALASCLAMCLVV), 489-509 (GGLLLFMILTALASLLQLGLL), 541-561 (IAFSIVGMFASHAVGSLSVFF), 572-592 (CGGLGLVLASAGFGMLTAPII), and 601-621 (FLHHIIFACCTLICIICILLL).

This sequence belongs to the major facilitator (TC 2.A.1) superfamily. Organic cation transporter (TC 2.A.1.19) family. Expressed in many tissues, including brain, spinal cord, kidney, liver, eye, adipose tissue, lung, epididymis, adrenal gland, pineal gland, skeletal muscle, heart, spleen, thymus, ovary, uterus, testis and epididymis.

It is found in the membrane. The protein is Solute carrier family 22 member 23 (Slc22a23) of Rattus norvegicus (Rat).